The following is a 233-amino-acid chain: Lipoprotein-releasing system ATP-binding protein LolD (233 aa).

One can recognise an ABC transporter domain in the interval 7 to 233 (IHCEKLSKTY…QLQSESERNH (227 aa)). An ATP-binding site is contributed by 43–50 (GASGAGKS).

It belongs to the ABC transporter superfamily. Lipoprotein translocase (TC 3.A.1.125) family. In terms of assembly, the complex is composed of two ATP-binding proteins (LolD) and two transmembrane proteins (LolC and LolE).

The protein resides in the cell inner membrane. Functionally, part of the ABC transporter complex LolCDE involved in the translocation of mature outer membrane-directed lipoproteins, from the inner membrane to the periplasmic chaperone, LolA. Responsible for the formation of the LolA-lipoprotein complex in an ATP-dependent manner. In Coxiella burnetii (strain RSA 493 / Nine Mile phase I), this protein is Lipoprotein-releasing system ATP-binding protein LolD.